The following is a 209-amino-acid chain: Large ribosomal subunit protein bL25 (209 aa).

The tract at residues 190–209 is disordered; the sequence is LKSEEAASEGAAEEEAKDGE. Over residues 200 to 209 the composition is skewed to acidic residues; it reads AAEEEAKDGE.

This sequence belongs to the bacterial ribosomal protein bL25 family. CTC subfamily. In terms of assembly, part of the 50S ribosomal subunit; part of the 5S rRNA/L5/L18/L25 subcomplex. Contacts the 5S rRNA. Binds to the 5S rRNA independently of L5 and L18.

Its function is as follows. This is one of the proteins that binds to the 5S RNA in the ribosome where it forms part of the central protuberance. This is Large ribosomal subunit protein bL25 from Brucella anthropi (strain ATCC 49188 / DSM 6882 / CCUG 24695 / JCM 21032 / LMG 3331 / NBRC 15819 / NCTC 12168 / Alc 37) (Ochrobactrum anthropi).